Here is a 404-residue protein sequence, read N- to C-terminus: MKLPIYLDYAATTPVDPRVAEKMMQHMTMDGVFGNPASRSHRYGWQAEEAVDVARNQVADLINADHREIVFTSGATESSNLAIKGIAHFYHKKGKHIITSKTEHKATLDTCRQLEREGYEVTYLVPDANGIIPMERLEAAMRDDTILVSIMHVNNEIGVIHDINAIGELCRSKGIFFHMDAAQSAGKIPIDVQTTKVDLISISGHKMYGPKGIGALYVRRKPRIRLESQMHGGGHERGMRSGTLATHQIVGLGEAAAVAKQDMAADSARITHLRDKLWNGIKHIEETYINGDMEQRYSGIFNVSFNFVEGESLMMALKDLAVSSGSACTSASLEPSYVLRALGLNDEMAHSSIRFSIGRFTTDEEIDHAIKTITESIDKLREMSPLWEMFKDGIDLEQVQWAHH.

Residues 75–76 (AT), N155, Q183, and 203–205 (SGH) each bind pyridoxal 5'-phosphate. N6-(pyridoxal phosphate)lysine is present on K206. T243 lines the pyridoxal 5'-phosphate pocket. The active-site Cysteine persulfide intermediate is C328. Position 328 (C328) interacts with [2Fe-2S] cluster.

The protein belongs to the class-V pyridoxal-phosphate-dependent aminotransferase family. NifS/IscS subfamily. Homodimer. Forms a heterotetramer with IscU, interacts with other sulfur acceptors. Pyridoxal 5'-phosphate is required as a cofactor.

It localises to the cytoplasm. It catalyses the reaction (sulfur carrier)-H + L-cysteine = (sulfur carrier)-SH + L-alanine. It functions in the pathway cofactor biosynthesis; iron-sulfur cluster biosynthesis. Functionally, master enzyme that delivers sulfur to a number of partners involved in Fe-S cluster assembly, tRNA modification or cofactor biosynthesis. Catalyzes the removal of elemental sulfur atoms from cysteine to produce alanine. Functions as a sulfur delivery protein for Fe-S cluster synthesis onto IscU, an Fe-S scaffold assembly protein, as well as other S acceptor proteins. The sequence is that of Cysteine desulfurase IscS from Shewanella frigidimarina (strain NCIMB 400).